Here is a 458-residue protein sequence, read N- to C-terminus: Protein U54 (458 aa).

N-linked (GlcNAc...) asparagine; by host glycosylation is found at Asn76, Asn102, Asn281, Asn321, Asn346, Asn434, and Asn451.

Belongs to the herpesviridae UL82 family.

This chain is Protein U54 (U54), found in Homo sapiens (Human).